Here is an 85-residue protein sequence, read N- to C-terminus: MIVYPSIDKLLENVNSRYSLAVLASKRAHQIEAGDLKMLSEYKSPKTVGMAMEEIAAGNVTIDPDSLMLEKDAEKMDKLSQKDGE.

The protein belongs to the RNA polymerase subunit omega family. In terms of assembly, the RNAP catalytic core consists of 2 alpha, 1 beta, 1 beta' and 1 omega subunit. When a sigma factor is associated with the core the holoenzyme is formed, which can initiate transcription.

It carries out the reaction RNA(n) + a ribonucleoside 5'-triphosphate = RNA(n+1) + diphosphate. Promotes RNA polymerase assembly. Latches the N- and C-terminal regions of the beta' subunit thereby facilitating its interaction with the beta and alpha subunits. In Latilactobacillus sakei subsp. sakei (strain 23K) (Lactobacillus sakei subsp. sakei), this protein is DNA-directed RNA polymerase subunit omega.